Reading from the N-terminus, the 132-residue chain is Agouti-signaling protein (132 aa).

The signal sequence occupies residues 1–22 (MDVTRLLLATLLVFLCFFTVYS). N-linked (GlcNAc...) asparagine glycosylation occurs at Asn39. The segment at 61 to 87 (HISRKEAEKKRSSKKEASMKKVARPRT) is disordered. Over residues 64-79 (RKEAEKKRSSKKEASM) the composition is skewed to basic and acidic residues. Cystine bridges form between Cys93-Cys108, Cys100-Cys114, Cys107-Cys125, Cys111-Cys132, and Cys116-Cys123. Residues 93 to 132 (CVATRDSCKPPAPACCDPCASCQCRFFRSACSCRVLSLNC) enclose the Agouti domain.

It is found in the secreted. Involved in the regulation of melanogenesis. The binding of ASP to MC1R precludes alpha-MSH initiated signaling and thus blocks production of cAMP, leading to a down-regulation of eumelanogenesis (brown/black pigment) and thus increasing synthesis of pheomelanin (yellow/red pigment). This chain is Agouti-signaling protein (ASIP), found in Colobus polykomos (Western black-and-white colobus monkey).